The chain runs to 63 residues: Small ribosomal subunit protein eS30 (63 aa).

Positions 1-33 are disordered; it reads MGKVHGSLARAGKVKSQTPKVEKQEKPKKPQGR.

The protein belongs to the eukaryotic ribosomal protein eS30 family. In terms of assembly, component of the small ribosomal subunit. Mature ribosomes consist of a small (40S) and a large (60S) subunit. The 40S subunit contains about 32 different proteins and 1 molecule of RNA (18S). The 60S subunit contains 45 different proteins and 3 molecules of RNA (25S, 5.8S and 5S).

It is found in the cytoplasm. Functionally, component of the ribosome, a large ribonucleoprotein complex responsible for the synthesis of proteins in the cell. The small ribosomal subunit (SSU) binds messenger RNAs (mRNAs) and translates the encoded message by selecting cognate aminoacyl-transfer RNA (tRNA) molecules. The large subunit (LSU) contains the ribosomal catalytic site termed the peptidyl transferase center (PTC), which catalyzes the formation of peptide bonds, thereby polymerizing the amino acids delivered by tRNAs into a polypeptide chain. The nascent polypeptides leave the ribosome through a tunnel in the LSU and interact with protein factors that function in enzymatic processing, targeting, and the membrane insertion of nascent chains at the exit of the ribosomal tunnel. This Candida albicans (strain SC5314 / ATCC MYA-2876) (Yeast) protein is Small ribosomal subunit protein eS30 (RPS30).